Reading from the N-terminus, the 55-residue chain is Large ribosomal subunit protein bL33 (55 aa).

It belongs to the bacterial ribosomal protein bL33 family.

The chain is Large ribosomal subunit protein bL33 (rpmG) from Buchnera aphidicola subsp. Acyrthosiphon pisum (strain APS) (Acyrthosiphon pisum symbiotic bacterium).